We begin with the raw amino-acid sequence, 515 residues long: Brahma-associated protein of 60 kDa (515 aa).

Positions 1 to 124 (MSQRFAPGQA…GGSKSDFATA (124 aa)) are disordered. The span at 17-34 (QPPPPAPGMRPYPPPGAS) shows a compositional bias: pro residues. Over residues 49 to 62 (PVPGTANVAGVPGV) the composition is skewed to low complexity. The span at 90–103 (TGAGGGGVGSGGGS) shows a compositional bias: gly residues. The tract at residues 116–204 (GSKSDFATAK…SKEPTNDGEE (89 aa)) is DNA-binding. One can recognise an SWIB/MDM2 domain in the interval 291-368 (YQPLQFKLDP…PQRLNPLLHP (78 aa)).

As to quaternary structure, there are 2 distinct Brahma complexes in the fruit fly, the Brahma-associated proteins (BAP) and Polybromo-containing BAP (PBAP) complexes, which are composed of common subunits Brm, Mor, Snr1/Bap45, Bap111/Dalo, Bap55, Bap60 and Act42A/Bap47, and additional signature subunits osa in the BAP complex and Polybromo and Bap170 in the PBAP complex. Interacts with sisA and sc. Interacts with mor. Interacts with p53. Interacts with erm (via N-terminal). Interacts with akirin; interaction is immune stimulation-dependent; activates selected Rel target gene promoters.

Involved in the recruitment and site-specific anchoring of the Brahma complex at specific promoter sites. The Brahma complex is a multiprotein complex which is the equivalent of the yeast SWI/SNF complex and acts by remodeling the chromatin by catalyzing an ATP-dependent alteration in the structure of nucleosomal DNA. This complex can both serve as a transcriptional coactivator or corepressor, depending on the context. Participates in X-chromosomal dosage compensation. Participates in neurogenesis. The sequence is that of Brahma-associated protein of 60 kDa (Bap60) from Drosophila melanogaster (Fruit fly).